Consider the following 405-residue polypeptide: Secreted aspartic protease 8 (405 aa).

The first 25 residues, 1–25 (MVSIITFTKNVLVTLAFALLAQGLA), serve as a signal peptide directing secretion. N-linked (GlcNAc...) asparagine glycosylation is present at N50. Residues 52 to 78 (TAHGQHHQSQQQQQQQQQQPAQKRGTV) are disordered. The segment covering 58 to 70 (HQSQQQQQQQQQQ) has biased composition (low complexity). Residues 89–392 (YAATITVGSN…DLDGNTISLA (304 aa)) form the Peptidase A1 domain. The active site involves D107. Residue 107–109 (DTG) coordinates pepstatin A. C122 and C134 are oxidised to a cystine. D292 is an active-site residue. A pepstatin A-binding site is contributed by 292–296 (DSGTT). C327 and C358 are disulfide-bonded.

It belongs to the peptidase A1 family. As to quaternary structure, monomer.

The protein localises to the secreted. The catalysed reaction is Preferential cleavage at the carboxyl of hydrophobic amino acids, but fails to cleave 15-Leu-|-Tyr-16, 16-Tyr-|-Leu-17 and 24-Phe-|-Phe-25 of insulin B chain. Activates trypsinogen, and degrades keratin.. Its function is as follows. Secreted aspartic peptidases (SAPs) are a group of ten acidic hydrolases considered as key virulence factors. These enzymes supply the fungus with nutrient amino acids as well as are able to degrade the selected host's proteins involved in the immune defense. Moreover, acts toward human hemoglobin though limited proteolysis to generate a variety of antimicrobial hemocidins, enabling to compete with the other microorganisms of the same physiological niche using the microbicidal peptides generated from the host protein. Plays a key role in defense against host by cleaving histatin-5 (Hst 5), a peptide from human saliva that carries out fungicidal activity. The cleavage rate decreases in an order of SAP2 &gt; SAP9 &gt; SAP3 &gt; SAP7 &gt; SAP4 &gt; SAP1 &gt; SAP8. The hydrolysis of Hst 5 by SAP8 causes production of the DSHAKRHHGY, HHSHRGY and FHEKHHSHRGY peptides. The chain is Secreted aspartic protease 8 from Candida albicans (Yeast).